The sequence spans 179 residues: Large ribosomal subunit protein uL5 (179 aa).

This sequence belongs to the universal ribosomal protein uL5 family. As to quaternary structure, part of the 50S ribosomal subunit; part of the 5S rRNA/L5/L18/L25 subcomplex. Contacts the 5S rRNA and the P site tRNA. Forms a bridge to the 30S subunit in the 70S ribosome.

Functionally, this is one of the proteins that bind and probably mediate the attachment of the 5S RNA into the large ribosomal subunit, where it forms part of the central protuberance. In the 70S ribosome it contacts protein S13 of the 30S subunit (bridge B1b), connecting the 2 subunits; this bridge is implicated in subunit movement. Contacts the P site tRNA; the 5S rRNA and some of its associated proteins might help stabilize positioning of ribosome-bound tRNAs. The sequence is that of Large ribosomal subunit protein uL5 from Klebsiella pneumoniae (strain 342).